Reading from the N-terminus, the 447-residue chain is N-succinylarginine dihydrolase (447 aa).

Substrate is bound by residues 19 to 28 (GGLAVGNIAS), Asn110, and 137 to 138 (HR). The active site involves Glu174. Substrate is bound at residue Arg213. His249 is a catalytic residue. Residues Asp251 and Asn362 each coordinate substrate. The Nucleophile role is filled by Cys368.

It belongs to the succinylarginine dihydrolase family. In terms of assembly, homodimer.

It carries out the reaction N(2)-succinyl-L-arginine + 2 H2O + 2 H(+) = N(2)-succinyl-L-ornithine + 2 NH4(+) + CO2. It functions in the pathway amino-acid degradation; L-arginine degradation via AST pathway; L-glutamate and succinate from L-arginine: step 2/5. Its function is as follows. Catalyzes the hydrolysis of N(2)-succinylarginine into N(2)-succinylornithine, ammonia and CO(2). The chain is N-succinylarginine dihydrolase from Nitrosospira multiformis (strain ATCC 25196 / NCIMB 11849 / C 71).